The chain runs to 284 residues: P2R1A-PPP2R2A-interacting phosphatase regulator 1 (284 aa).

Residues 1–65 are disordered; that stretch reads MAQEKMELDL…RRNSTTFPSR (65 aa). Gly residues predominate over residues 20–29; that stretch reads EGGGPGGGGL. The residue at position 32 (Ser32) is a Phosphoserine. The residue at position 34 (Ser34) is a Phosphoserine; by CHEK1. Residues Ser42, Ser45, Ser59, and Ser73 each carry the phosphoserine modification. A Glycyl lysine isopeptide (Lys-Gly) (interchain with G-Cter in SUMO1) cross-link involves residue Lys86. Phosphoserine is present on residues Ser140 and Ser144. Phosphothreonine is present on Thr146. Positions 164 to 185 are disordered; it reads SNGLPPSPIPSPTTRFTTRRSQ. Residues 175–185 are compositionally biased toward low complexity; that stretch reads PTTRFTTRRSQ. A phosphoserine mark is found at Ser184 and Ser186. Positions 233 to 284 are disordered; it reads GVCVSSDTLDGNSSSAGSSCNSPAKVSTTTDSPVSPAQAASPFIPVDELSSK. Residues 243–254 are compositionally biased toward low complexity; sequence GNSSSAGSSCNS. The span at 256–267 shows a compositional bias: polar residues; sequence AKVSTTTDSPVS. Phosphoserine occurs at positions 264, 267, and 273.

It belongs to the FAM122 family. In terms of assembly, interacts with PPP2CA and PPP2R1A. Interacts (via its N-terminus) with PPP2R2A; the interaction is direct and this interaction inhibits PP2A activity. The CHEK1-mediated Ser-34 phosphorylated form interacts with 14-3-3 proteins. CHEK1-mediated phosphorylation at Ser-34 negatively regulates its ability to inhibit serine/threonine-protein phosphatase 2A (PP2A) activity. Phosphorylation leads to its release from the PP2A complex and its sequestration by 14-3-3 proteins in the cytoplasm resulting in its inability to translocate to the nucleus, where it otherwise inhibits PP2A.

The protein localises to the nucleus. It localises to the cytoplasm. Functionally, acts as an inhibitor of serine/threonine-protein phosphatase 2A (PP2A) activity. Inhibits PP2A activity by blocking the substrate binding site on PPP2R2A and the active site of PPP2CA. Potentiates ubiquitin-mediated proteasomal degradation of serine/threonine-protein phosphatase 2A catalytic subunit alpha (PPP2CA). Inhibits PP2A-mediated dephosphorylation of WEE1, promoting ubiquitin-mediated proteolysis of WEE1, thereby releasing G2/M checkpoint. The polypeptide is P2R1A-PPP2R2A-interacting phosphatase regulator 1 (Mus musculus (Mouse)).